A 259-amino-acid chain; its full sequence is uncharacterized protein (259 aa).

One can recognise an ABC transporter domain in the interval 4-243 (INLKNINLTR…KILTDFYQEK (240 aa)). ATP is bound at residue 36–43 (GLNGSGKS).

The protein belongs to the ABC transporter superfamily.

This is an uncharacterized protein from Lactococcus lactis subsp. lactis (strain IL1403) (Streptococcus lactis).